The chain runs to 216 residues: Protein-methionine-sulfoxide reductase heme-binding subunit MsrQ (216 aa).

5 helical membrane-spanning segments follow: residues 16–36 (IWAL…LGAT), 48–68 (EHLL…ITPI), 82–102 (ALGL…MVLD), 119–139 (FITI…TSNI), and 155–175 (LVYV…KVVG).

This sequence belongs to the MsrQ family. As to quaternary structure, heterodimer of a catalytic subunit (MsrP) and a heme-binding subunit (MsrQ). FMN is required as a cofactor. It depends on heme b as a cofactor.

It localises to the cell inner membrane. In terms of biological role, part of the MsrPQ system that repairs oxidized periplasmic proteins containing methionine sulfoxide residues (Met-O), using respiratory chain electrons. Thus protects these proteins from oxidative-stress damage caused by reactive species of oxygen and chlorine generated by the host defense mechanisms. MsrPQ is essential for the maintenance of envelope integrity under bleach stress, rescuing a wide series of structurally unrelated periplasmic proteins from methionine oxidation. MsrQ provides electrons for reduction to the reductase catalytic subunit MsrP, using the quinone pool of the respiratory chain. In Rhizobium meliloti (strain 1021) (Ensifer meliloti), this protein is Protein-methionine-sulfoxide reductase heme-binding subunit MsrQ.